We begin with the raw amino-acid sequence, 134 residues long: MRGGPVNSHDVTDEQWEGLAQVVPLRGRDAWPSAVGHRSIPEAQTEARRRFVVLRVNIFADARDVAETLMRGIPVLLDLTSAETEVAKRVLDFSTGVVFGLASGMHRVDRNVFLLTPPGTEVQGLMEGVGVPGI.

Belongs to the SepF family. In terms of assembly, homodimer. Interacts with FtsZ.

The protein localises to the cytoplasm. Its function is as follows. Cell division protein that is part of the divisome complex and is recruited early to the Z-ring. Probably stimulates Z-ring formation, perhaps through the cross-linking of FtsZ protofilaments. Its function overlaps with FtsA. The protein is Cell division protein SepF 1 of Streptomyces avermitilis (strain ATCC 31267 / DSM 46492 / JCM 5070 / NBRC 14893 / NCIMB 12804 / NRRL 8165 / MA-4680).